Consider the following 270-residue polypeptide: Putative phosphatase YxeH (270 aa).

Residue Asp8 is the Nucleophile of the active site. Asp8 is a binding site for Mg(2+). Residue Met9 coordinates phosphate. Asp10 lines the Mg(2+) pocket. Phosphate is bound by residues 42–43 and Lys196; that span reads TG. Asp219 is a Mg(2+) binding site. Asn222 is a phosphate binding site.

It belongs to the HAD-like hydrolase superfamily. Cof family. Mg(2+) serves as cofactor.

The protein is Putative phosphatase YxeH (yxeH) of Bacillus subtilis (strain 168).